Here is a 280-residue protein sequence, read N- to C-terminus: Phosphatidylserine decarboxylase proenzyme (280 aa).

Catalysis depends on charge relay system; for autoendoproteolytic cleavage activity residues Asp-88, His-144, and Ser-247. Ser-247 acts as the Schiff-base intermediate with substrate; via pyruvic acid; for decarboxylase activity in catalysis. Position 247 is a pyruvic acid (Ser); by autocatalysis (Ser-247).

Belongs to the phosphatidylserine decarboxylase family. PSD-B subfamily. Prokaryotic type I sub-subfamily. In terms of assembly, heterodimer of a large membrane-associated beta subunit and a small pyruvoyl-containing alpha subunit. Requires pyruvate as cofactor. In terms of processing, is synthesized initially as an inactive proenzyme. Formation of the active enzyme involves a self-maturation process in which the active site pyruvoyl group is generated from an internal serine residue via an autocatalytic post-translational modification. Two non-identical subunits are generated from the proenzyme in this reaction, and the pyruvate is formed at the N-terminus of the alpha chain, which is derived from the carboxyl end of the proenzyme. The autoendoproteolytic cleavage occurs by a canonical serine protease mechanism, in which the side chain hydroxyl group of the serine supplies its oxygen atom to form the C-terminus of the beta chain, while the remainder of the serine residue undergoes an oxidative deamination to produce ammonia and the pyruvoyl prosthetic group on the alpha chain. During this reaction, the Ser that is part of the protease active site of the proenzyme becomes the pyruvoyl prosthetic group, which constitutes an essential element of the active site of the mature decarboxylase.

The protein localises to the cell membrane. The enzyme catalyses a 1,2-diacyl-sn-glycero-3-phospho-L-serine + H(+) = a 1,2-diacyl-sn-glycero-3-phosphoethanolamine + CO2. It participates in phospholipid metabolism; phosphatidylethanolamine biosynthesis; phosphatidylethanolamine from CDP-diacylglycerol: step 2/2. Its function is as follows. Catalyzes the formation of phosphatidylethanolamine (PtdEtn) from phosphatidylserine (PtdSer). In Xanthomonas euvesicatoria pv. vesicatoria (strain 85-10) (Xanthomonas campestris pv. vesicatoria), this protein is Phosphatidylserine decarboxylase proenzyme.